A 356-amino-acid polypeptide reads, in one-letter code: Phosphate acyltransferase (356 aa).

This sequence belongs to the PlsX family. As to quaternary structure, homodimer. Probably interacts with PlsY.

It is found in the cytoplasm. It carries out the reaction a fatty acyl-[ACP] + phosphate = an acyl phosphate + holo-[ACP]. It participates in lipid metabolism; phospholipid metabolism. Catalyzes the reversible formation of acyl-phosphate (acyl-PO(4)) from acyl-[acyl-carrier-protein] (acyl-ACP). This enzyme utilizes acyl-ACP as fatty acyl donor, but not acyl-CoA. The protein is Phosphate acyltransferase of Bartonella henselae (strain ATCC 49882 / DSM 28221 / CCUG 30454 / Houston 1) (Rochalimaea henselae).